The following is a 296-amino-acid chain: Thioredoxin-related transmembrane protein 2 (296 aa).

An N-terminal signal peptide occupies residues 1-48 (MAVLAPLIALVYSVPRLSRWLAQPYYLLSALLSAAFLLVRKLPPLCHG). At 49 to 102 (LPTQREDGNPCDFDWREVEILMFLSAIVMMKNRRSITVEQHIGNIFMFSKVANA) the chain is on the extracellular side. Residues 103 to 125 (ILFFRLDIRMGLLYITLCIVFLM) form a helical membrane-spanning segment. The Thioredoxin domain occupies 114 to 270 (LLYITLCIVF…YQRAKKPSKA (157 aa)). Topologically, residues 126–296 (TCEPPLYMGP…VSDGENKKDK (171 aa)) are cytoplasmic. Ser-211, Ser-243, and Ser-288 each carry phosphoserine. The tract at residues 266-296 (KPSKAGDSIPEEQPVASAPTTVSDGENKKDK) is disordered. Residues 293 to 296 (KKDK) carry the Di-lysine motif motif.

In terms of assembly, monomer. Homodimer; disulfide-linked. Occurs in both reduced and oxidized monomeric form. Oxidative conditions increase homodimerization. Interacts with CANX. Interacts with ATP2A2.

The protein localises to the endoplasmic reticulum membrane. It is found in the mitochondrion membrane. In terms of biological role, endoplasmic reticulum and mitochondria-associated protein that probably functions as a regulator of cellular redox state and thereby regulates protein post-translational modification, protein folding and mitochondrial activity. Indirectly regulates neuronal proliferation, migration, and organization in the developing brain. The protein is Thioredoxin-related transmembrane protein 2 (TMX2) of Pongo abelii (Sumatran orangutan).